The primary structure comprises 319 residues: Protein-methionine methyltransferase laeA (319 aa).

The disordered stretch occupies residues 269-293 (REPQSGTCSVQRENGANGDRSTLSA). Residues 270 to 293 (EPQSGTCSVQRENGANGDRSTLSA) are compositionally biased toward polar residues.

This sequence belongs to the methyltransferase superfamily. LaeA methyltransferase family. Component of the heterotrimeric velvet complex composed of laeA, veA and velB; VeA acting as a bridging protein between laeA and velB.

Its subcellular location is the nucleus. The catalysed reaction is L-methionyl-[protein] + S-adenosyl-L-methionine = S-methyl-L-methionyl-[protein] + S-adenosyl-L-homocysteine. In terms of biological role, methyltransferase; component of the velvet transcription factor complex that acts as a global regulator for secondary metabolite gene expression. Controls the expression of the chaetoglobosin A biosynthesis cluster via the cheR transcription factor and the subsequent production of chaetoglobosin A. Positively regulates the expression of smtA and negatively regulates the expression of velB. LaeA also regulates pigmentation and spores production. This is Protein-methionine methyltransferase laeA from Chaetomium globosum (strain ATCC 6205 / CBS 148.51 / DSM 1962 / NBRC 6347 / NRRL 1970) (Soil fungus).